The chain runs to 218 residues: Histidine biosynthesis bifunctional protein HisIE (218 aa).

A phosphoribosyl-AMP cyclohydrolase region spans residues 1-118; sequence MTDLSELNFD…DAPDTGLDGT (118 aa). Positions 119 to 218 are phosphoribosyl-ATP pyrophosphohydrolase; sequence LERVYATITE…SGLKGPKEVG (100 aa).

In the N-terminal section; belongs to the PRA-CH family. It in the C-terminal section; belongs to the PRA-PH family.

It localises to the cytoplasm. The catalysed reaction is 1-(5-phospho-beta-D-ribosyl)-ATP + H2O = 1-(5-phospho-beta-D-ribosyl)-5'-AMP + diphosphate + H(+). It carries out the reaction 1-(5-phospho-beta-D-ribosyl)-5'-AMP + H2O = 1-(5-phospho-beta-D-ribosyl)-5-[(5-phospho-beta-D-ribosylamino)methylideneamino]imidazole-4-carboxamide. The protein operates within amino-acid biosynthesis; L-histidine biosynthesis; L-histidine from 5-phospho-alpha-D-ribose 1-diphosphate: step 2/9. It functions in the pathway amino-acid biosynthesis; L-histidine biosynthesis; L-histidine from 5-phospho-alpha-D-ribose 1-diphosphate: step 3/9. The sequence is that of Histidine biosynthesis bifunctional protein HisIE (hisI) from Deinococcus radiodurans (strain ATCC 13939 / DSM 20539 / JCM 16871 / CCUG 27074 / LMG 4051 / NBRC 15346 / NCIMB 9279 / VKM B-1422 / R1).